A 32-amino-acid chain; its full sequence is Acetolactate synthase, catabolic (32 aa).

This sequence belongs to the TPP enzyme family. In terms of assembly, homodimer.

The enzyme catalyses 2 pyruvate + H(+) = (2S)-2-acetolactate + CO2. The protein operates within polyol metabolism; (R,R)-butane-2,3-diol biosynthesis; (R,R)-butane-2,3-diol from pyruvate: step 1/3. This Klebsiella aerogenes (Enterobacter aerogenes) protein is Acetolactate synthase, catabolic (budB).